The sequence spans 67 residues: Large ribosomal subunit protein bL31c (67 aa).

The protein belongs to the bacterial ribosomal protein bL31 family. Type A subfamily. As to quaternary structure, part of the 50S ribosomal subunit.

It is found in the plastid. It localises to the chloroplast. Functionally, binds the 23S rRNA. The chain is Large ribosomal subunit protein bL31c (rpl31) from Cyanidioschyzon merolae (strain NIES-3377 / 10D) (Unicellular red alga).